The following is a 421-amino-acid chain: Dihydroorotase (421 aa).

Zn(2+)-binding residues include H59 and H61. Substrate is bound by residues H61–R63 and N93. Zn(2+)-binding residues include D150, H177, and H230. N276 is a binding site for substrate. D303 provides a ligand contact to Zn(2+). D303 is a catalytic residue. Residue H307 coordinates substrate.

This sequence belongs to the metallo-dependent hydrolases superfamily. DHOase family. Class I DHOase subfamily. Zn(2+) is required as a cofactor.

The enzyme catalyses (S)-dihydroorotate + H2O = N-carbamoyl-L-aspartate + H(+). It participates in pyrimidine metabolism; UMP biosynthesis via de novo pathway; (S)-dihydroorotate from bicarbonate: step 3/3. In terms of biological role, catalyzes the reversible cyclization of carbamoyl aspartate to dihydroorotate. In Desulfotalea psychrophila (strain LSv54 / DSM 12343), this protein is Dihydroorotase.